A 437-amino-acid polypeptide reads, in one-letter code: tRNA(Ile2) 2-agmatinylcytidine synthetase TiaS (437 aa).

It belongs to the TiaS family.

It localises to the cytoplasm. The enzyme catalyses cytidine(34) in tRNA(Ile2) + agmatine + ATP + H2O = 2-agmatinylcytidine(34) in tRNA(Ile2) + AMP + 2 phosphate + 2 H(+). Functionally, ATP-dependent agmatine transferase that catalyzes the formation of 2-agmatinylcytidine (agm2C) at the wobble position (C34) of tRNA(Ile2), converting the codon specificity from AUG to AUA. The chain is tRNA(Ile2) 2-agmatinylcytidine synthetase TiaS from Thermoplasma volcanium (strain ATCC 51530 / DSM 4299 / JCM 9571 / NBRC 15438 / GSS1).